Reading from the N-terminus, the 460-residue chain is Cysteine--tRNA ligase (460 aa).

Cys-28 contributes to the Zn(2+) binding site. The 'HIGH' region signature appears at 30-40 (MTVYDYCHLGH). Zn(2+) contacts are provided by Cys-209, His-234, and Glu-238. Residues 266–270 (KMSKS) carry the 'KMSKS' region motif. An ATP-binding site is contributed by Lys-269.

It belongs to the class-I aminoacyl-tRNA synthetase family. In terms of assembly, monomer. Requires Zn(2+) as cofactor.

It is found in the cytoplasm. The catalysed reaction is tRNA(Cys) + L-cysteine + ATP = L-cysteinyl-tRNA(Cys) + AMP + diphosphate. This chain is Cysteine--tRNA ligase, found in Pseudomonas aeruginosa (strain LESB58).